The primary structure comprises 749 residues: MEVVPAEVNSLLPDDIMDTAITLVDEDSIEAVIVSSPIPMETELEEIVNINSTGDSTATPISTEPITVYSNHTNQVAVNTTVSKADSNTTVKPAFPSGLQKLGAQTPVTISANQIILNKVSQTSDLKLGNQTLKPDGQKLILTTLGKSGSPIVLALPHSQLPQAQKVTAQAQPGDAKLPPQQIKVVTIGGRPEVKPVIGVSALTPGSQLINTTTQPSVLQTQQLKTVQIAKKPRTPTSGPVITKLIFAKPINSKAVTGQTTQASPPVVTGRVLSQSTPGTPSKTITISESGVIGSTLNSTTQTPNKIAISPLKSPNKTVKSAVQTITVGGMSTSQFKTIIPLATAPNVQQIQVPGSKFHYVRLVTATTASSSAQPVSQSPSVNTQPLQQAKPVVVNTTPVRMSVPFVQAQAVKQVVPKPINSTSQIVTTSQPQQRLIMPATPLPQIQPNLTNLPPGTVLAPAPGTGNVGYAVLPAQYVTQLQQSSYVSIASNSNFTGTSGIQTQARLPFNGIIPSESTSRPRKPCNCTKSLCLKLYCDCFANGEFCNNCNCTNCYNNLEHENERQKAIKACLDRNPEAFKPKIGKGKEGESDRRHSKGCNCKRSGCLKNYCECYEAKIMCSSICKCIGCKNFEESPERKTLMHLADAAEVRVQQQTAAKTKLSSQISDLLTRPTPALNSAGGKLPFTFVTKEVAEATCNCLLAQAEQADKKGKSKAAAERMILEEFGRCLMSVINSAGKAKSDPCAMHC.

Lysine 139 participates in a covalent cross-link: Glycyl lysine isopeptide (Lys-Gly) (interchain with G-Cter in SUMO2). Residues lysine 244 and lysine 249 each carry the N6-acetyllysine modification. Phosphoserine is present on residues serine 264, serine 282, serine 310, and serine 314. Lysine 357 participates in a covalent cross-link: Glycyl lysine isopeptide (Lys-Gly) (interchain with G-Cter in SUMO2). Positions 521-634 (PRKPCNCTKS…KCIGCKNFEE (114 aa)) constitute a CRC domain. Residues 523–536 (KPCNCTKSLCLKLY) are DNA-binding. Positions 525, 527, 532, 537, 539, 546, 549, 551, and 554 each coordinate Zn(2+). The segment at 583–596 (IGKGKEGESDRRHS) is linker. The Zn(2+) site is built by cysteine 599, cysteine 601, cysteine 606, cysteine 611, cysteine 613, cysteine 620, cysteine 624, cysteine 626, and cysteine 629. Positions 599–612 (CNCKRSGCLKNYCE) are DNA-binding. Residue serine 635 is modified to Phosphoserine. Glycyl lysine isopeptide (Lys-Gly) (interchain with G-Cter in SUMO2) cross-links involve residues lysine 639, lysine 659, and lysine 661.

The protein belongs to the lin-54 family. Component of the DREAM complex (also named LINC complex) at least composed of E2F4, E2F5, LIN9, LIN37, LIN52, LIN54, MYBL1, MYBL2, RBL1, RBL2, RBBP4, RBL2, TFDP1 and TFDP2. The complex exists in quiescent cells where it represses cell cycle-dependent genes. It dissociates in S phase when LIN9, LIN37, LIN52 and LIN54 form a subcomplex that binds to MYBL2.

The protein resides in the nucleus. Its function is as follows. Component of the DREAM complex, a multiprotein complex that can both act as a transcription activator or repressor depending on the context. In G0 phase, the complex binds to more than 800 promoters and is required for repression of E2F target genes. In S phase, the complex selectively binds to the promoters of G2/M genes whose products are required for mitosis and participates in their cell cycle dependent activation. In the complex, acts as a DNA-binding protein that binds the promoter of CDK1 in a sequence-specific manner. Specifically recognizes the consensus motif 5'-TTYRAA-3' in target DNA. The sequence is that of Protein lin-54 homolog (Lin54) from Mus musculus (Mouse).